The chain runs to 316 residues: MSKLDTFIQHAVNAVPVSGTSLISSLYGDSLSHRGGEIWLGSLAALLEGLGFGERFVRTALFRLNKEGWLDVSRIGRRSFYSLSDKGLRLTRRAESKIYRAEQPAWDGKWLLLLSEGLDKSTLADVKKQLIWQGFGALAPSLMASPSQKLADVQTLLHEAGVADNVICFEAQIPLALSRAALRARVEECWHLTEQNAMYETFIQSFRPLVPLLKEAADELTPERAFHIQLLLIHFYRRVVLKDPLLPEELLPAHWAGHTARQLCINIYQRVAPAALAFVSEKGETSVGELPAPGSLYFQRFGGLNIEQEALCQFIR.

Belongs to the PaaX family.

Its pathway is aromatic compound metabolism; phenylacetate degradation. Its function is as follows. Negative regulator of the paaZ and paaABCDEFGHIJK catabolic operons. Binds the consensus sequence 5'-WWTRTGATTCGYGWT-3'. Binding of PaaX is specifically inhibited by phenylacetyl-coenzyme A (PA-CoA). This chain is Transcriptional repressor PaaX (paaX), found in Escherichia coli (strain K12).